Here is a 215-residue protein sequence, read N- to C-terminus: UPF0502 protein PputGB1_3531 (215 aa).

Belongs to the UPF0502 family.

The sequence is that of UPF0502 protein PputGB1_3531 from Pseudomonas putida (strain GB-1).